Reading from the N-terminus, the 175-residue chain is MTDTEFGYVHGLAEDYLKYVLQIQQPGSKPSKTSRVLQDVASSVQDEVERTLKQCLDKFDVVSVDTARTIFNQVMEKEFEDGIVNWGRIVTIFAFEGILTKKLLGKCIASDMDMCKDISFFVAEFITENTGEWIKQNGGWENGFVKKFETKSGWLTFLEVTGKICETLCRLKQYY.

This sequence belongs to the Bcl-2 family. As to quaternary structure, interacts directly with BCL2L11/BIM, BAK1, BID, BMF and BBC3. Interacts directly with PMAIP1. Interacts with BOP. Interacts with ING4. Interacts with UBQLN4.

It is found in the cytoplasm. Functionally, retards apoptosis induced by IL-3 deprivation. May function in the response of hemopoietic cells to external signals and in maintaining endothelial survival during infection. Can inhibit apoptosis induced by serum starvation in the mammary epithelial cell line HC11. This chain is Bcl-2-related protein A1 (BCL2A1), found in Bos taurus (Bovine).